A 130-amino-acid polypeptide reads, in one-letter code: Phosphoribosyl-AMP cyclohydrolase 1 (130 aa).

Position 77 (Asp77) interacts with Mg(2+). Cys78 provides a ligand contact to Zn(2+). Positions 79 and 81 each coordinate Mg(2+). The Zn(2+) site is built by Cys95 and Cys102.

It belongs to the PRA-CH family. As to quaternary structure, homodimer. The cofactor is Mg(2+). Zn(2+) serves as cofactor.

The protein localises to the cytoplasm. It carries out the reaction 1-(5-phospho-beta-D-ribosyl)-5'-AMP + H2O = 1-(5-phospho-beta-D-ribosyl)-5-[(5-phospho-beta-D-ribosylamino)methylideneamino]imidazole-4-carboxamide. It participates in amino-acid biosynthesis; L-histidine biosynthesis; L-histidine from 5-phospho-alpha-D-ribose 1-diphosphate: step 3/9. Its function is as follows. Catalyzes the hydrolysis of the adenine ring of phosphoribosyl-AMP. The chain is Phosphoribosyl-AMP cyclohydrolase 1 from Pseudomonas fluorescens (strain ATCC BAA-477 / NRRL B-23932 / Pf-5).